The sequence spans 103 residues: Cell division protein FtsB (103 aa).

Residues 1 to 3 (MGK) are Cytoplasmic-facing. Residues 4–21 (LTLLLLAILVWLQYSLWF) form a helical membrane-spanning segment. Topologically, residues 22–103 (GKNGIHDYTR…RAQSAGQNNR (82 aa)) are periplasmic. Positions 28–71 (DYTRVNDDVAALQATNAKLKARNDQLFAEIDDLNGGQEALEERA) form a coiled coil.

This sequence belongs to the FtsB family. In terms of assembly, part of a complex composed of FtsB, FtsL and FtsQ.

It localises to the cell inner membrane. Functionally, essential cell division protein. May link together the upstream cell division proteins, which are predominantly cytoplasmic, with the downstream cell division proteins, which are predominantly periplasmic. This is Cell division protein FtsB from Shigella flexneri serotype 5b (strain 8401).